An 890-amino-acid polypeptide reads, in one-letter code: Alanine--tRNA ligase (890 aa).

Residues histidine 573, histidine 577, cysteine 676, and histidine 680 each contribute to the Zn(2+) site.

Belongs to the class-II aminoacyl-tRNA synthetase family. Zn(2+) is required as a cofactor.

The protein resides in the cytoplasm. It carries out the reaction tRNA(Ala) + L-alanine + ATP = L-alanyl-tRNA(Ala) + AMP + diphosphate. Catalyzes the attachment of alanine to tRNA(Ala) in a two-step reaction: alanine is first activated by ATP to form Ala-AMP and then transferred to the acceptor end of tRNA(Ala). Also edits incorrectly charged Ser-tRNA(Ala) and Gly-tRNA(Ala) via its editing domain. The polypeptide is Alanine--tRNA ligase (Corynebacterium efficiens (strain DSM 44549 / YS-314 / AJ 12310 / JCM 11189 / NBRC 100395)).